The primary structure comprises 216 residues: Hydrogenase-4 component E (216 aa).

Residues Met-1 to Gly-3 lie on the Periplasmic side of the membrane. The helical transmembrane segment at Ser-4–Val-24 threads the bilayer. Topologically, residues Lys-25–Ser-38 are cytoplasmic. The next 2 membrane-spanning stretches (helical) occupy residues Leu-39–Ile-59 and Trp-60–Ala-80. Residues Arg-81–Leu-92 are Cytoplasmic-facing. Residues Phe-93–Val-113 form a helical membrane-spanning segment. Residues Gln-114–Thr-122 lie on the Periplasmic side of the membrane. Residues Gly-123 to Val-143 traverse the membrane as a helical segment. Residues Ser-144 to Arg-150 are Cytoplasmic-facing. Residues Gln-151–Trp-171 traverse the membrane as a helical segment. The Periplasmic portion of the chain corresponds to Arg-172–Glu-175. The chain crosses the membrane as a helical span at residues Leu-176 to Ala-196. At Arg-197–Gly-216 the chain is on the cytoplasmic side.

It localises to the cell inner membrane. This chain is Hydrogenase-4 component E (hyfE), found in Escherichia coli O157:H7.